Here is a 397-residue protein sequence, read N- to C-terminus: Acetate kinase (397 aa).

Asn-8 contributes to the Mg(2+) binding site. Lys-15 contacts ATP. A substrate-binding site is contributed by Arg-89. Residue Asp-146 is the Proton donor/acceptor of the active site. ATP-binding positions include 206–210 (HLGNG), 281–283 (DLR), and 329–333 (GVGEN). Glu-382 provides a ligand contact to Mg(2+).

Belongs to the acetokinase family. As to quaternary structure, homodimer. The cofactor is Mg(2+). Mn(2+) serves as cofactor.

It localises to the cytoplasm. The catalysed reaction is acetate + ATP = acetyl phosphate + ADP. It participates in metabolic intermediate biosynthesis; acetyl-CoA biosynthesis; acetyl-CoA from acetate: step 1/2. Its function is as follows. Catalyzes the formation of acetyl phosphate from acetate and ATP. Can also catalyze the reverse reaction. This is Acetate kinase from Bacillus cereus (strain ATCC 10987 / NRS 248).